The following is a 657-amino-acid chain: ER degradation-enhancing alpha-mannosidase-like protein 1 (657 aa).

The Cytoplasmic portion of the chain corresponds to 1–4; that stretch reads MQWR. The chain crosses the membrane as a helical; Signal-anchor for type II membrane protein span at residues 5–25; sequence ALVLGLVLLRLGLHGVLWLVF. Residues 26 to 657 lie on the Lumenal side of the membrane; the sequence is GLGPSMGFYQ…RQIDQMVGLI (632 aa). The segment at 48–94 is disordered; the sequence is SPDGPASPTSGPVGRPGGVSGPSWLQPPGTGAAQSPRKAPRRPGPGM. 5 N-linked (GlcNAc...) asparagine glycosylation sites follow: Asn-181, Asn-198, Asn-299, Asn-342, and Asn-624.

The protein belongs to the glycosyl hydrolase 47 family. Interacts with DNAJC10. Interacts with DERL2 and DERL3. Binds to SEL1L.

It localises to the endoplasmic reticulum membrane. Extracts misfolded glycoproteins, but not glycoproteins undergoing productive folding, from the calnexin cycle. It is directly involved in endoplasmic reticulum-associated degradation (ERAD) and targets misfolded glycoproteins for degradation in an N-glycan-independent manner, probably by forming a complex with SEL1L. It has low mannosidase activity, catalyzing mannose trimming from Man8GlcNAc2 to Man7GlcNAc2. The chain is ER degradation-enhancing alpha-mannosidase-like protein 1 (EDEM1) from Homo sapiens (Human).